Here is a 527-residue protein sequence, read N- to C-terminus: Peptide chain release factor 3 (527 aa).

Residues 10–278 form the tr-type G domain; it reads DRRRTFAIIS…TFVENAPAPL (269 aa). Residues 19–26, 87–91, and 141–144 contribute to the GTP site; these read SHPDAGKT, DTPGH, and NKLD.

The protein belongs to the TRAFAC class translation factor GTPase superfamily. Classic translation factor GTPase family. PrfC subfamily.

It localises to the cytoplasm. Increases the formation of ribosomal termination complexes and stimulates activities of RF-1 and RF-2. It binds guanine nucleotides and has strong preference for UGA stop codons. It may interact directly with the ribosome. The stimulation of RF-1 and RF-2 is significantly reduced by GTP and GDP, but not by GMP. In Geobacter metallireducens (strain ATCC 53774 / DSM 7210 / GS-15), this protein is Peptide chain release factor 3.